Here is a 284-residue protein sequence, read N- to C-terminus: D-tagatose-1,6-bisphosphate aldolase subunit GatY (284 aa).

Asp-82 acts as the Proton donor in catalysis. Positions 83 and 180 each coordinate Zn(2+). Gly-181 is a dihydroxyacetone phosphate binding site. Residue His-208 coordinates Zn(2+). Dihydroxyacetone phosphate contacts are provided by residues 209 to 211 (GAS) and 230 to 233 (NVAT).

Belongs to the class II fructose-bisphosphate aldolase family. TagBP aldolase GatY subfamily. In terms of assembly, forms a complex with GatZ. Requires Zn(2+) as cofactor.

It carries out the reaction D-tagatofuranose 1,6-bisphosphate = D-glyceraldehyde 3-phosphate + dihydroxyacetone phosphate. Its pathway is carbohydrate metabolism; D-tagatose 6-phosphate degradation; D-glyceraldehyde 3-phosphate and glycerone phosphate from D-tagatose 6-phosphate: step 2/2. Its function is as follows. Catalytic subunit of the tagatose-1,6-bisphosphate aldolase GatYZ, which catalyzes the reversible aldol condensation of dihydroxyacetone phosphate (DHAP or glycerone-phosphate) with glyceraldehyde 3-phosphate (G3P) to produce tagatose 1,6-bisphosphate (TBP). Requires GatZ subunit for full activity and stability. Is involved in the catabolism of galactitol. The protein is D-tagatose-1,6-bisphosphate aldolase subunit GatY of Salmonella typhi.